Here is a 323-residue protein sequence, read N- to C-terminus: L-lactate dehydrogenase 1 (323 aa).

NAD(+)-binding positions include Val-18, Asp-39, Tyr-69, and 83 to 84 (GA). The substrate site is built by Gln-86 and Arg-92. Residues Ser-105, 122-124 (VAN), and Ser-147 each bind NAD(+). Substrate is bound at residue 124–127 (NPVD). 152–155 (DTGR) contacts substrate. His-179 (proton acceptor) is an active-site residue. At Tyr-223 the chain carries Phosphotyrosine. Position 232 (Thr-232) interacts with substrate.

Belongs to the LDH/MDH superfamily. LDH family. As to quaternary structure, homotetramer.

It localises to the cytoplasm. It carries out the reaction (S)-lactate + NAD(+) = pyruvate + NADH + H(+). The protein operates within fermentation; pyruvate fermentation to lactate; (S)-lactate from pyruvate: step 1/1. Its function is as follows. Catalyzes the conversion of lactate to pyruvate. This Lactobacillus acidophilus (strain ATCC 700396 / NCK56 / N2 / NCFM) protein is L-lactate dehydrogenase 1.